A 595-amino-acid chain; its full sequence is Transketolase-like protein 1 (595 aa).

A thiamine diphosphate-binding site is contributed by 93-95 (GWP). Residues aspartate 125, asparagine 155, and isoleucine 157 each coordinate Mg(2+). Position 155 (asparagine 155) interacts with thiamine diphosphate. Thiamine diphosphate is bound by residues lysine 217, glutamate 339, and phenylalanine 365. Glutamate 339 serves as the catalytic Proton donor. Residues histidine 389 and aspartate 397 each contribute to the substrate site. Residue histidine 401 coordinates thiamine diphosphate.

The protein belongs to the transketolase family. Homodimer. The cofactor is Mg(2+). It depends on Ca(2+) as a cofactor. Mn(2+) is required as a cofactor. Co(2+) serves as cofactor. Requires thiamine diphosphate as cofactor. As to expression, not expressed in the embryonic neocortex.

Its subcellular location is the cytoplasm. The catalysed reaction is D-sedoheptulose 7-phosphate + D-glyceraldehyde 3-phosphate = aldehydo-D-ribose 5-phosphate + D-xylulose 5-phosphate. Functionally, catalyzes the transfer of a two-carbon ketol group from a ketose donor to an aldose acceptor, via a covalent intermediate with the cofactor thiamine pyrophosphate. The polypeptide is Transketolase-like protein 1 (Mus musculus (Mouse)).